A 402-amino-acid chain; its full sequence is Putative neuropeptide Y receptor 11 (402 aa).

Topologically, residues 1–45 (MGSVNESCDNYVEIFNKINYFFRDDQVINGTEYSPKEFGYFITFA) are extracellular. 2 N-linked (GlcNAc...) asparagine glycosylation sites follow: Asn-5 and Asn-29. The helical transmembrane segment at 46 to 66 (YMLIILFGAIGNFLTIIVVIL) threads the bilayer. Over 67 to 85 (NPAMRTTRNFFILNLALSD) the chain is Cytoplasmic. A helical membrane pass occupies residues 86–106 (FFVCIVTAPTTLYTVLYMFWP). At 107-122 (FSRTLCKIAGSLQGFN) the chain is on the extracellular side. The cysteines at positions 112 and 194 are disulfide-linked. A helical transmembrane segment spans residues 123–143 (IFLSTFSIASIAVDRYVLIIF). The Cytoplasmic segment spans residues 144-152 (PTKRERQQN). A helical transmembrane segment spans residues 153 to 173 (LSFCFFIMIWVISLILAVPLL). Residues 174–210 (QASDLTPVFVEPSCDLALYICHEQNEIWEKMIISKGT) are Extracellular-facing. A helical transmembrane segment spans residues 211-231 (YTLAVLITQYAFPLFSLVFAY). Over 232 to 272 (SRIAHRMKLRFANRNQNVTTNTNTSQRRRSVVERQRRTHLL) the chain is Cytoplasmic. Residues 273–293 (LVCVVAVFAVAWLPLNVFHIF) form a helical membrane-spanning segment. The Extracellular portion of the chain corresponds to 294–306 (NTFELVNSFSVTT). The helical transmembrane segment at 307 to 328 (FSICHCLAMCSACLNPLIYAFF) threads the bilayer. Residues 329–402 (NHNFRIEFMH…LSAMEQDEQL (74 aa)) are Cytoplasmic-facing.

It belongs to the G-protein coupled receptor 1 family.

It localises to the cell membrane. Its function is as follows. Could be a receptor for neuropeptide Y and peptide YY. This is Putative neuropeptide Y receptor 11 (npr-11) from Caenorhabditis elegans.